Here is a 904-residue protein sequence, read N- to C-terminus: NADH-quinone oxidoreductase subunit G (904 aa).

The region spanning 1 to 83 is the 2Fe-2S ferredoxin-type domain; sequence MATIHVDGKA…GTWISIDDEE (83 aa). [2Fe-2S] cluster is bound by residues cysteine 34, cysteine 45, cysteine 48, and cysteine 67. In terms of domain architecture, 4Fe-4S His(Cys)3-ligated-type spans 83-122; the sequence is ESKAFRASVVEWLMTNHPHDCPVCEEGGHCHLQDMTVMTG. Residues histidine 99, cysteine 103, cysteine 106, cysteine 112, cysteine 151, cysteine 154, cysteine 157, cysteine 201, cysteine 228, cysteine 231, cysteine 235, and cysteine 263 each coordinate [4Fe-4S] cluster. The region spanning 221–277 is the 4Fe-4S Mo/W bis-MGD-type domain; the sequence is MQFAPSICHGCSSGCNISPGERYGELRRIENRFNGSVNQYFLCDRGRFGYGYVNRKD.

Belongs to the complex I 75 kDa subunit family. As to quaternary structure, composed of 13 different subunits. Subunits NuoCD, E, F, and G constitute the peripheral sector of the complex. [2Fe-2S] cluster serves as cofactor. It depends on [4Fe-4S] cluster as a cofactor.

The catalysed reaction is a quinone + NADH + 5 H(+)(in) = a quinol + NAD(+) + 4 H(+)(out). In terms of biological role, NDH-1 shuttles electrons from NADH, via FMN and iron-sulfur (Fe-S) centers, to quinones in the respiratory chain. The immediate electron acceptor for the enzyme in this species is believed to be ubiquinone. Couples the redox reaction to proton translocation (for every two electrons transferred, four hydrogen ions are translocated across the cytoplasmic membrane), and thus conserves the redox energy in a proton gradient. The chain is NADH-quinone oxidoreductase subunit G (nuoG) from Pseudomonas putida (strain ATCC 47054 / DSM 6125 / CFBP 8728 / NCIMB 11950 / KT2440).